The sequence spans 224 residues: MAAQNQSAQKDLEIQVKTPDGKVDGSVALPAELFDVPANIALMHQVVTAQRAAARQGTHSTKTRGDVSGGGRKPYRQKGTGRARQGSTRAPQFTGGGVVHGPKPRDYSQRTPKKMIAAALRGALSDRARNGRIHAVTELVAGQTPSTKSAKTFLATITDRKQVLVVIGRDDQTGVKSVRNLPGVHILSPDQLNTYDVLRADDVVFSVEALNAYIAANTSEEVSA.

The segment at 52 to 109 is disordered; that stretch reads AAARQGTHSTKTRGDVSGGGRKPYRQKGTGRARQGSTRAPQFTGGGVVHGPKPRDYSQ.

The protein belongs to the universal ribosomal protein uL4 family. In terms of assembly, part of the 50S ribosomal subunit.

In terms of biological role, one of the primary rRNA binding proteins, this protein initially binds near the 5'-end of the 23S rRNA. It is important during the early stages of 50S assembly. It makes multiple contacts with different domains of the 23S rRNA in the assembled 50S subunit and ribosome. Forms part of the polypeptide exit tunnel. This is Large ribosomal subunit protein uL4 from Mycobacterium marinum (strain ATCC BAA-535 / M).